We begin with the raw amino-acid sequence, 291 residues long: 4-diphosphocytidyl-2-C-methyl-D-erythritol kinase (291 aa).

Lys19 is an active-site residue. ATP is bound at residue 102–112; that stretch reads PMGGGIGGGSS. Asp144 is an active-site residue.

It belongs to the GHMP kinase family. IspE subfamily.

It catalyses the reaction 4-CDP-2-C-methyl-D-erythritol + ATP = 4-CDP-2-C-methyl-D-erythritol 2-phosphate + ADP + H(+). It functions in the pathway isoprenoid biosynthesis; isopentenyl diphosphate biosynthesis via DXP pathway; isopentenyl diphosphate from 1-deoxy-D-xylulose 5-phosphate: step 3/6. Its function is as follows. Catalyzes the phosphorylation of the position 2 hydroxy group of 4-diphosphocytidyl-2C-methyl-D-erythritol. The protein is 4-diphosphocytidyl-2-C-methyl-D-erythritol kinase of Ectopseudomonas mendocina (strain ymp) (Pseudomonas mendocina).